Consider the following 131-residue polypeptide: Protein Turandot M (131 aa).

Positions 1-23 are cleaved as a signal peptide; it reads MNPTVYLSCLVVFSLFYLGKAQA.

Belongs to the Turandot family.

The protein localises to the secreted. In terms of biological role, a humoral factor that may play a role in stress tolerance. Requires Mekk1 expression in the fat body to regulate response to septic injury and consequent immune response. The sequence is that of Protein Turandot M from Drosophila yakuba (Fruit fly).